The chain runs to 87 residues: Probable Fe(2+)-trafficking protein (87 aa).

This sequence belongs to the Fe(2+)-trafficking protein family.

Its function is as follows. Could be a mediator in iron transactions between iron acquisition and iron-requiring processes, such as synthesis and/or repair of Fe-S clusters in biosynthetic enzymes. This chain is Probable Fe(2+)-trafficking protein, found in Francisella philomiragia subsp. philomiragia (strain ATCC 25017 / CCUG 19701 / FSC 153 / O#319-036).